Consider the following 623-residue polypeptide: ATPase expression protein 3 (623 aa).

5 PPR repeats span residues 217-251 (SVQC…GCKP), 252-292 (NTTT…NGIF), 362-396 (NLKF…QLKF), 405-439 (NSET…LVGP), and 445-479 (NVNT…SERY).

It is found in the mitochondrion inner membrane. In terms of biological role, required for respiration. The sequence is that of ATPase expression protein 3 (AEP3) from Candida glabrata (strain ATCC 2001 / BCRC 20586 / JCM 3761 / NBRC 0622 / NRRL Y-65 / CBS 138) (Yeast).